Here is a 358-residue protein sequence, read N- to C-terminus: F-box protein At4g35733 (358 aa).

The region spanning alanine 4–histidine 51 is the F-box domain.

As to quaternary structure, part of a SCF (ASK-cullin-F-box) protein ligase complex.

Its pathway is protein modification; protein ubiquitination. Functionally, component of SCF(ASK-cullin-F-box) E3 ubiquitin ligase complexes, which may mediate the ubiquitination and subsequent proteasomal degradation of target proteins. This chain is F-box protein At4g35733, found in Arabidopsis thaliana (Mouse-ear cress).